Reading from the N-terminus, the 1140-residue chain is Probable DNA-directed RNA polymerase II subunit RPB2 homolog (1140 aa).

A Mg(2+)-binding site is contributed by Asp773. Zn(2+)-binding residues include Cys1092, Cys1095, Cys1105, and Cys1108. Residues 1092-1108 (CKDCGMMSSTSKKCHHC) form a C4-type zinc finger.

Belongs to the RNA polymerase beta chain family.

The catalysed reaction is RNA(n) + a ribonucleoside 5'-triphosphate = RNA(n+1) + diphosphate. Component of the DNA-dependent RNA polymerase that catalyzes the transcription of DNA into RNA using the four ribonucleoside triphosphates as substrates. Second largest component of RNA polymerase II which synthesizes mRNA precursors and many functional non-coding RNAs. Proposed to contribute to the polymerase catalytic activity and forms the polymerase active center together with the largest subunit. In Invertebrate iridescent virus 3 (IIV-3), this protein is Probable DNA-directed RNA polymerase II subunit RPB2 homolog.